A 192-amino-acid chain; its full sequence is Crossover junction endodeoxyribonuclease RuvC (192 aa).

Catalysis depends on residues aspartate 8, glutamate 67, and aspartate 139. The Mg(2+) site is built by aspartate 8, glutamate 67, and aspartate 139.

The protein belongs to the RuvC family. Homodimer which binds Holliday junction (HJ) DNA. The HJ becomes 2-fold symmetrical on binding to RuvC with unstacked arms; it has a different conformation from HJ DNA in complex with RuvA. In the full resolvosome a probable DNA-RuvA(4)-RuvB(12)-RuvC(2) complex forms which resolves the HJ. It depends on Mg(2+) as a cofactor.

It localises to the cytoplasm. It catalyses the reaction Endonucleolytic cleavage at a junction such as a reciprocal single-stranded crossover between two homologous DNA duplexes (Holliday junction).. Its function is as follows. The RuvA-RuvB-RuvC complex processes Holliday junction (HJ) DNA during genetic recombination and DNA repair. Endonuclease that resolves HJ intermediates. Cleaves cruciform DNA by making single-stranded nicks across the HJ at symmetrical positions within the homologous arms, yielding a 5'-phosphate and a 3'-hydroxyl group; requires a central core of homology in the junction. The consensus cleavage sequence is 5'-(A/T)TT(C/G)-3'. Cleavage occurs on the 3'-side of the TT dinucleotide at the point of strand exchange. HJ branch migration catalyzed by RuvA-RuvB allows RuvC to scan DNA until it finds its consensus sequence, where it cleaves and resolves the cruciform DNA. The sequence is that of Crossover junction endodeoxyribonuclease RuvC from Haemophilus ducreyi (strain 35000HP / ATCC 700724).